The chain runs to 374 residues: Peptide chain release factor 2 (374 aa).

Gln248 is modified (N5-methylglutamine).

It belongs to the prokaryotic/mitochondrial release factor family. In terms of processing, methylated by PrmC. Methylation increases the termination efficiency of RF2.

The protein localises to the cytoplasm. Functionally, peptide chain release factor 2 directs the termination of translation in response to the peptide chain termination codons UGA and UAA. This chain is Peptide chain release factor 2, found in Thermomicrobium roseum (strain ATCC 27502 / DSM 5159 / P-2).